Consider the following 142-residue polypeptide: Transcriptional regulator MraZ (142 aa).

2 consecutive SpoVT-AbrB domains span residues 5–51 and 77–120; these read ASAL…PRPE and AMDV…DAQT.

This sequence belongs to the MraZ family. In terms of assembly, forms oligomers.

Its subcellular location is the cytoplasm. The protein localises to the nucleoid. In Paraburkholderia xenovorans (strain LB400), this protein is Transcriptional regulator MraZ.